A 238-amino-acid chain; its full sequence is Small ribosomal subunit protein eS4 (238 aa).

The S4 RNA-binding domain occupies 38–101; that stretch reads LPLALIIRDV…GEVYRVVPDA (64 aa).

It belongs to the eukaryotic ribosomal protein eS4 family.

This chain is Small ribosomal subunit protein eS4, found in Pyrobaculum aerophilum (strain ATCC 51768 / DSM 7523 / JCM 9630 / CIP 104966 / NBRC 100827 / IM2).